The chain runs to 76 residues: UPF0291 protein GWCH70_1239 (76 aa).

Residues 54–76 (VIDPNGNDVTPKKLKESQKSRLH) form a disordered region. Basic and acidic residues predominate over residues 63-76 (TPKKLKESQKSRLH).

This sequence belongs to the UPF0291 family.

The protein resides in the cytoplasm. The protein is UPF0291 protein GWCH70_1239 of Geobacillus sp. (strain WCH70).